The chain runs to 106 residues: Stress-responsive protein 1 (106 aa).

It is found in the mitochondrion. In terms of biological role, stress-responsive protein that may play a role in regulation of cell cycle. This is Stress-responsive protein 1 (sro1) from Schizosaccharomyces pombe (strain 972 / ATCC 24843) (Fission yeast).